The chain runs to 266 residues: MKRYPTFIKNSILLFYFFFLLILPVVVLFLLIFQNNWHEVLRKATDPIAVSAYLLTVQMAFYAALVNSIFGFIITWVLTRYQFWGREFLDAAVDLPFALPTSVAGLTLATVYGDQGWIGSLFNLFGFQIVFTKIGVLLAMIFVSFPFVIRTLQPVLQEMEKSLEEAAWSLGASSWETFRKVILPTLWPALFTGFTLSFSRALGEFGSIVMISSNLPFKDLVASVLIYQSLEQYDYLGASVIGAVVLLIALFTLLLINAFQIMKFRV.

Helical transmembrane passes span 12–32, 59–79, 91–111, 129–149, 181–201, 206–226, and 236–256; these read ILLF…FLLI, MAFY…WVLT, AAVD…LATV, IVFT…PFVI, VILP…FSRA, GSIV…SVLI, and LGAS…LLLI. The region spanning 53–257 is the ABC transmembrane type-1 domain; the sequence is YLLTVQMAFY…IALFTLLLIN (205 aa).

It belongs to the binding-protein-dependent transport system permease family. CysTW subfamily.

It is found in the plastid. Its subcellular location is the chloroplast membrane. Its function is as follows. Part of the ABC transporter complex cysAWTP (TC 3.A.1.6.1) involved in sulfate/thiosulfate import. Probably responsible for the translocation of the substrate across the membrane. The chain is Probable sulfate transport system permease protein cysT (cysT) from Chlorella vulgaris (Green alga).